The sequence spans 529 residues: Serine hydroxymethyltransferase 3, chloroplastic (529 aa).

A chloroplast-targeting transit peptide spans 1–60; the sequence is MQACCGGNSMASLQQPGRVQGSVFPPIMPPVTKFSQQLKFNISKPFRSSFLKRNLVSEMR. N6-(pyridoxal phosphate)lysine is present on lysine 314.

It belongs to the SHMT family. Homotetramer. The cofactor is pyridoxal 5'-phosphate.

The protein resides in the plastid. The protein localises to the chloroplast. The enzyme catalyses (6R)-5,10-methylene-5,6,7,8-tetrahydrofolate + glycine + H2O = (6S)-5,6,7,8-tetrahydrofolate + L-serine. Its pathway is one-carbon metabolism; tetrahydrofolate interconversion. Inhibited by 5-CH3-H4PteGlu1/5 and 5-HCO-H4PteGlu1/5 in vitro. Its function is as follows. Catalyzes the interconversion of serine and glycine and directs the hydroxymethyl moiety of serine into the metabolic network of H4PteGlu(n)-bound one-carbon units. The sequence is that of Serine hydroxymethyltransferase 3, chloroplastic from Arabidopsis thaliana (Mouse-ear cress).